The chain runs to 453 residues: MKLLSRAGSFSRFYSLKVAPKVKTSAAPGGVPLQPQDLEFTKLPNGLVIASLENYAPLSRIGLFVKAGSRYEDSNNLGTSHLLRLASSLTTKGASSFKITRGIEAVGGKLSVTATRENMAYTVEGIRSDIEILMEFLLNVTTAPEFRRWEVAALRSQLKIDKAVAFQNSQTRIIENLHDVAYKNALANPLYCPDYRMGKITSEELHYFVQNHFTSARMALVGLGVSHSVLKQVAEQFLNMRGGLGLAGAKAKYRGGEIREQNGDNLVHAAIVAESAAIGNAEANAFSVLQHLLGAGPHIKRGNNTTSLLSQSVAKGSHQPFDVSAFNASYSDSGLFGIYTISQAAAAGEVINAAYNQVKAVAQGNLSSADVQAAKNKLKAGYLMSVETSEGFLSEIGSQALAAGSYMPPSTVLQQIDSVADADVVKAAKKFVSGKKSMAASGNLGHTPFLDEL.

A mitochondrion-targeting transit peptide spans 1–14 (MKLLSRAGSFSRFY). N6-acetyllysine is present on residues Lys-66, Lys-199, and Lys-250. Ser-368 carries the phosphoserine modification.

It belongs to the peptidase M16 family. UQCRC2/QCR2 subfamily. As to quaternary structure, component of the ubiquinol-cytochrome c oxidoreductase (cytochrome b-c1 complex, complex III, CIII), a multisubunit enzyme composed of 11 subunits. The complex is composed of 3 respiratory subunits cytochrome b, cytochrome c1 and Rieske protein UQCRFS1, 2 core protein subunits UQCRC1/QCR1 and UQCRC2/QCR2, and 6 low-molecular weight protein subunits UQCRH/QCR6, UQCRB/QCR7, UQCRQ/QCR8, UQCR10/QCR9, UQCR11/QCR10 and subunit 9, the cleavage product of Rieske protein UQCRFS1. The complex exists as an obligatory dimer and forms supercomplexes (SCs) in the inner mitochondrial membrane with NADH-ubiquinone oxidoreductase (complex I, CI) and cytochrome c oxidase (complex IV, CIV), resulting in different assemblies (supercomplex SCI(1)III(2)IV(1) and megacomplex MCI(2)III(2)IV(2)). Interacts with RAB5IF. Interacts with STMP1. In terms of processing, acetylation of Lys-159 and Lys-250 is observed in liver mitochondria from fasted mice but not from fed mice. As to expression, expressed in neurons and astrocytes of the cerebral cortex and hippocampus (at protein level).

Its subcellular location is the mitochondrion inner membrane. In terms of biological role, component of the ubiquinol-cytochrome c oxidoreductase, a multisubunit transmembrane complex that is part of the mitochondrial electron transport chain which drives oxidative phosphorylation. The respiratory chain contains 3 multisubunit complexes succinate dehydrogenase (complex II, CII), ubiquinol-cytochrome c oxidoreductase (cytochrome b-c1 complex, complex III, CIII) and cytochrome c oxidase (complex IV, CIV), that cooperate to transfer electrons derived from NADH and succinate to molecular oxygen, creating an electrochemical gradient over the inner membrane that drives transmembrane transport and the ATP synthase. The cytochrome b-c1 complex catalyzes electron transfer from ubiquinol to cytochrome c, linking this redox reaction to translocation of protons across the mitochondrial inner membrane, with protons being carried across the membrane as hydrogens on the quinol. In the process called Q cycle, 2 protons are consumed from the matrix, 4 protons are released into the intermembrane space and 2 electrons are passed to cytochrome c. The 2 core subunits UQCRC1/QCR1 and UQCRC2/QCR2 are homologous to the 2 mitochondrial-processing peptidase (MPP) subunits beta-MPP and alpha-MPP respectively, and they seem to have preserved their MPP processing properties. May be involved in the in situ processing of UQCRFS1 into the mature Rieske protein and its mitochondrial targeting sequence (MTS)/subunit 9 when incorporated into complex III. The protein is Cytochrome b-c1 complex subunit 2, mitochondrial (Uqcrc2) of Mus musculus (Mouse).